Reading from the N-terminus, the 353-residue chain is UPF0324 membrane protein PP_3661 (353 aa).

The next 8 helical transmembrane spans lie at 20–42, 70–92, 105–127, 137–159, 166–188, 234–253, 266–288, and 326–348; these read LNGI…MPAI, ASWA…AFFG, WSGL…WCGM, ALLT…ESAL, SAMA…PLAI, MTRV…WISR, IAMP…QVLP, and ALAT…TLGV.

Belongs to the UPF0324 family.

The protein localises to the cell membrane. This Pseudomonas putida (strain ATCC 47054 / DSM 6125 / CFBP 8728 / NCIMB 11950 / KT2440) protein is UPF0324 membrane protein PP_3661.